A 786-amino-acid polypeptide reads, in one-letter code: DNA repair and recombination protein RAD54-like (786 aa).

The segment at 2–9 is required for chromatin remodeling, strand pairing activities and coupling of ATPase activity; it reads RRSLAPSQ. T22 bears the Phosphothreonine mark. A Helicase ATP-binding domain is found at 165 to 340; it reads EGKRGSFNGC…FSLVNFVNPE (176 aa). 178 to 185 provides a ligand contact to ATP; the sequence is DEMGLGKT. Residues 291–294 carry the DEGH box motif; the sequence is DEGH. A Helicase C-terminal domain is found at 497–654; that stretch reads LLDFMLAAIR…NNESVEKHFT (158 aa). The disordered stretch occupies residues 738-786; that stretch reads EAKPAATTTDEDEELSDSKRKAKKTLASDDDDDEDFVLNCSSGEEFSGF. Residues 776–786 show a composition bias toward polar residues; it reads NCSSGEEFSGF.

The protein belongs to the SNF2/RAD54 helicase family. Interacts (via N-terminus) with spn-A/Rad51.

It is found in the nucleus. Involved in mitotic DNA repair and meiotic recombination. Functions in the recombinational DNA repair pathway. Essential for interhomolog gene conversion (GC), but may have a less important role in intersister GC than spn-A/Rad51. In the presence of DNA, spn-A/Rad51 enhances the ATPase activity of okr/Rad54. In Drosophila grimshawi (Hawaiian fruit fly), this protein is DNA repair and recombination protein RAD54-like.